Here is a 485-residue protein sequence, read N- to C-terminus: Adenosylhomocysteinase (485 aa).

Residues Thr-64, Asp-139, and Glu-205 each contribute to the substrate site. 206–208 (TTT) serves as a coordination point for NAD(+). Substrate-binding residues include Lys-235 and Asp-239. NAD(+)-binding positions include Asn-240, 269–274 (GYGDVG), Glu-292, Asn-327, 348–350 (IGH), and Asn-397.

The protein belongs to the adenosylhomocysteinase family. NAD(+) is required as a cofactor.

The enzyme catalyses S-adenosyl-L-homocysteine + H2O = L-homocysteine + adenosine. It functions in the pathway amino-acid biosynthesis; L-homocysteine biosynthesis; L-homocysteine from S-adenosyl-L-homocysteine: step 1/1. Functionally, adenosylhomocysteine is a competitive inhibitor of S-adenosyl-L-methionine-dependent methyl transferase reactions; therefore adenosylhomocysteinase may play a key role in the control of methylations via regulation of the intracellular concentration of adenosylhomocysteine. The chain is Adenosylhomocysteinase (SAHH) from Lupinus luteus (European yellow lupine).